Here is a 574-residue protein sequence, read N- to C-terminus: MYND-type zinc finger protein C31F10.10c (574 aa).

Disordered regions lie at residues 207–253 (DSGD…QDPR) and 283–307 (MTTP…DEID). 2 stretches are compositionally biased toward polar residues: residues 243–253 (IYSNDSFQDPR) and 283–301 (MTTP…ASET). Residues 482–523 (NLLCNKWEEHSRQFAKCRRCRRTKYCSKECQHQAWPGHSRWC) form an MYND-type; degenerate zinc finger. Zn(2+) is bound by residues C498, C501, H519, and C523. Positions 534–574 (KRESSKINSVTESESTASPAASVIPVGTESVTSSTQSDSRL) are disordered. Residues 542–556 (SVTESESTASPAASV) are compositionally biased toward low complexity. The segment covering 562–574 (ESVTSSTQSDSRL) has biased composition (polar residues).

Belongs to the MUB1/samB family.

The protein localises to the nucleus. The protein resides in the cytoplasm. It localises to the cytoskeleton. It is found in the microtubule organizing center. Its subcellular location is the spindle pole body. This Schizosaccharomyces pombe (strain 972 / ATCC 24843) (Fission yeast) protein is MYND-type zinc finger protein C31F10.10c.